Reading from the N-terminus, the 1012-residue chain is Structural polyprotein (1012 aa).

Asp-30 contributes to the a divalent metal cation binding site. Residues 513–755 (ADKGYEVVAN…AGRQYHLAMA (243 aa)) enclose the Peptidase S50 domain. Catalysis depends on Ser-652, which acts as the Nucleophile. Lys-692 is a catalytic residue. Positions 970–1012 (MEMKHRNPRRALPKPKPKPNAPTQRPPGRLGRWIRTVSDEDLE) are disordered. Residues 975 to 986 (RNPRRALPKPKP) show a composition bias toward basic residues. The interaction with VP1 protein stretch occupies residues 1003–1012 (IRTVSDEDLE).

In terms of assembly, homotrimer. A central divalent metal stabilizes the VP2 trimer. Interacts with host ITGA4/ITGB1. As to quaternary structure, homodimer. Interacts (via C-terminus) with VP1 in the cytoplasm. Interacts with VP2. Post-translationally, specific enzymatic cleavages yield mature proteins. The capsid assembly seems to be regulated by polyprotein processing. The protease VP4 cleaves itself off the polyprotein, thus releasing pre-VP2 and VP3 within the infected cell. During capsid assembly, the C-terminus of pre-VP2 is further processed by VP4, giving rise to VP2, the external capsid protein and three small peptides that all stay closely associated with the capsid.

The protein resides in the virion. It is found in the host cytoplasm. Capsid protein VP2 self assembles to form an icosahedral capsid with a T=13 symmetry, about 70 nm in diameter, and consisting of 260 VP2 trimers. The capsid encapsulates the genomic dsRNA. VP2 is also involved in attachment and entry into the host cell by interacting with host ITGA4/ITGB1. Functionally, the precursor of VP2 plays an important role in capsid assembly. First, pre-VP2 and VP2 oligomers assemble to form a procapsid. Then, the pre-VP2 intermediates may be processed into VP2 proteins by proteolytic cleavage mediated by VP4 to obtain the mature virion. The final capsid is composed of pentamers and hexamers but VP2 has a natural tendency to assemble into all-pentameric structures. Therefore pre-VP2 may be required to allow formation of the hexameric structures. Its function is as follows. Protease VP4 is a serine protease that cleaves the polyprotein into its final products. Pre-VP2 is first partially cleaved, and may be completely processed by VP4 upon capsid maturation. In terms of biological role, capsid protein VP3 plays a key role in virion assembly by providing a scaffold for the capsid made of VP2. May self-assemble to form a T=4-like icosahedral inner-capsid composed of at least 180 trimers. Plays a role in genomic RNA packaging by recruiting VP1 into the capsid and interacting with the dsRNA genome segments to form a ribonucleoprotein complex. Additionally, the interaction of the VP3 C-terminal tail with VP1 removes the inherent structural blockade of the polymerase active site. Thus, VP3 can also function as a transcriptional activator. Structural peptide 1 is a small peptide derived from pre-VP2 C-terminus. It destabilizes and perforates cell membranes, suggesting a role during entry. Functionally, structural peptide 2 is a small peptide derived from pVP2 C-terminus. It is not essential for the virus viability, but viral growth is affected when missing. Its function is as follows. Structural peptide 3 is a small peptide derived from pVP2 C-terminus. It is not essential for the virus viability, but viral growth is affected when missing. In terms of biological role, structural peptide 4 is a small peptide derived from pVP2 C-terminus. It is essential for the virus viability. The chain is Structural polyprotein from Avian infectious bursal disease virus (strain Chicken/Cuba/Soroa/1998) (IBDV).